Here is a 190-residue protein sequence, read N- to C-terminus: Recombination protein RecR (190 aa).

The C4-type zinc-finger motif lies at cysteine 58–cysteine 73. Positions asparagine 81–proline 167 constitute a Toprim domain.

It belongs to the RecR family.

May play a role in DNA repair. It seems to be involved in an RecBC-independent recombinational process of DNA repair. It may act with RecF and RecO. The polypeptide is Recombination protein RecR (Campylobacter jejuni (strain RM1221)).